A 316-amino-acid polypeptide reads, in one-letter code: UPF0761 membrane protein PM1616 (316 aa).

Helical transmembrane passes span 36 to 56 (MLAL…FPVF), 92 to 112 (QMSA…INSI), 128 to 148 (LVFS…LIGA), 172 to 192 (ILSF…YTVV), 204 to 224 (IGAL…LWYV), and 236 to 256 (AMAT…VILI).

The protein belongs to the UPF0761 family.

Its subcellular location is the cell inner membrane. In Pasteurella multocida (strain Pm70), this protein is UPF0761 membrane protein PM1616.